The sequence spans 466 residues: Probable Xaa-Pro aminopeptidase pepP (466 aa).

Positions 264, 275, 398, and 438 each coordinate Mn(2+).

The protein belongs to the peptidase M24B family. Requires Mn(2+) as cofactor.

The enzyme catalyses Release of any N-terminal amino acid, including proline, that is linked to proline, even from a dipeptide or tripeptide.. In terms of biological role, catalyzes the removal of a penultimate prolyl residue from the N-termini of peptides. The protein is Probable Xaa-Pro aminopeptidase pepP (pepP) of Aspergillus clavatus (strain ATCC 1007 / CBS 513.65 / DSM 816 / NCTC 3887 / NRRL 1 / QM 1276 / 107).